The chain runs to 133 residues: Snaclec echicetin subunit alpha (133 aa).

Disulfide bonds link Cys-4–Cys-15, Cys-31–Cys-127, and Cys-102–Cys-119. In terms of domain architecture, C-type lectin spans 11 to 128 (YEGHCYQLFR…CEFKFPFVCK (118 aa)).

Belongs to the snaclec family. As to quaternary structure, heterodimer of subunits alpha and beta; disulfide-linked. Forms an active complex with the pentameric immunoglobuline Mkappa (IgMkappa). As to expression, expressed by the venom gland.

Its subcellular location is the secreted. Echicetin itself inhibits aggregation of washed platelets induced by vWF, thrombin or alboaggregin-A. However, when complexed with the pentameric plasma immunoglobulin Mkappa (IgMkappa), echicetin binds specifically to GPIb and activates platelets. This is caused by P-selectin expression and activation of alpha-IIb/beta-3 as well as tyrosine phosphorylation of several signal transduction molecules, including p53/56(LYN), p64, p72(SYK), p70 to p90, and p120. In vivo, it induces thrombocytopenia when injected into mice, probably accounting of activation of platelets rather than inhibition. In Echis carinatus sochureki (Saw-scaled viper), this protein is Snaclec echicetin subunit alpha.